Here is a 729-residue protein sequence, read N- to C-terminus: ATP-dependent DNA helicase Hel308 (729 aa).

ATP contacts are provided by residues Gln-28 and 46–53; that span reads IPTASGKT. The Helicase ATP-binding domain maps to 33–199; sequence EKGLLEGRNL…WLEAELVVSE (167 aa). The DEAH box motif lies at 144–147; it reads DEVH. One can recognise a Helicase C-terminal domain in the interval 232-426; the sequence is AVNLALDTLK…SKLGTENALR (195 aa). The tract at residues 706–729 is disordered; the sequence is SSGIIASEPPEKSPYSGQKTISDY. A compositionally biased stretch (polar residues) spans 720–729; sequence YSGQKTISDY.

The protein belongs to the helicase family. Hel308 subfamily. Monomer.

The catalysed reaction is Couples ATP hydrolysis with the unwinding of duplex DNA by translocating in the 3'-5' direction.. It catalyses the reaction ATP + H2O = ADP + phosphate + H(+). DNA-dependent ATPase and 3'-5' DNA helicase that may be involved in repair of stalled replication forks. The chain is ATP-dependent DNA helicase Hel308 from Methanosarcina barkeri (strain Fusaro / DSM 804).